A 477-amino-acid polypeptide reads, in one-letter code: 2-(3-amino-3-carboxypropyl)histidine synthase subunit 2 (477 aa).

Residues cysteine 88, cysteine 109, and cysteine 328 each contribute to the [4Fe-4S] cluster site.

This sequence belongs to the DPH1/DPH2 family. DPH2 subfamily. Component of the 2-(3-amino-3-carboxypropyl)histidine synthase complex composed of DPH1, DPH2, DPH3 and a NADH-dependent reductase. [4Fe-4S] cluster serves as cofactor.

Its pathway is protein modification; peptidyl-diphthamide biosynthesis. Its function is as follows. Required for the first step of diphthamide biosynthesis, a post-translational modification of histidine which occurs in elongation factor 2. DPH1 and DPH2 transfer a 3-amino-3-carboxypropyl (ACP) group from S-adenosyl-L-methionine (SAM) to a histidine residue, the reaction is assisted by a reduction system comprising DPH3 and a NADH-dependent reductase. Facilitates the reduction of the catalytic iron-sulfur cluster found in the DPH1 subunit. This is 2-(3-amino-3-carboxypropyl)histidine synthase subunit 2 (DPH2) from Gallus gallus (Chicken).